Reading from the N-terminus, the 896-residue chain is DNA mismatch repair protein MutS (896 aa).

618-625 (GPNMSGKS) contributes to the ATP binding site. Basic and acidic residues predominate over residues 805-825 (GKESTKTGKGENKNISHKTES). Residues 805–826 (GKESTKTGKGENKNISHKTESD) are disordered.

The protein belongs to the DNA mismatch repair MutS family.

In terms of biological role, this protein is involved in the repair of mismatches in DNA. It is possible that it carries out the mismatch recognition step. This protein has a weak ATPase activity. This chain is DNA mismatch repair protein MutS, found in Halothermothrix orenii (strain H 168 / OCM 544 / DSM 9562).